The sequence spans 963 residues: Ubiquitin carboxyl-terminal hydrolase 4 (963 aa).

Residues Pro-11–Val-122 form the DUSP domain. Residues Thr-27–Glu-216 form a necessary for interaction with SART3 region. Positions Val-133–Lys-141 match the Nuclear export signal motif. The Ubiquitin-like 1 domain maps to Leu-142–Arg-226. The tract at residues Asn-219–Ser-277 is disordered. A compositionally biased stretch (polar residues) spans Pro-225–Thr-243. The required for USP4 activation by providing conformational flexibility between the DUSP and catalytic domains stretch occupies residues Gln-229–Thr-295. Over residues Ser-244–Ala-261 the composition is skewed to low complexity. The USP domain maps to Cys-302–Arg-923. Cys-311 acts as the Nucleophile in catalysis. The tract at residues Pro-384–Phe-386 is regulates ubiquitin dissociation. The segment at Leu-405 to Glu-407 is necessary for interaction with RBL2. Phosphoserine is present on Ser-445. The interval Leu-459 to Glu-463 is necessary for interaction with RB1 and RBL2. Zn(2+) contacts are provided by Cys-461 and Cys-464. The 89-residue stretch at Leu-483–Ser-571 folds into the Ubiquitin-like 2 domain. Positions Lys-485–Ala-775 are interacts with DUSP and ubiquitin-like 1 domains and is required for USP4 activation. The disordered stretch occupies residues Pro-634–Pro-701. Residues Ser-675 and Ser-680 each carry the phosphoserine modification. The short motif at Gln-767 to Lys-772 is the Nuclear localization signal element. Residues Cys-799 and Cys-802 each contribute to the Zn(2+) site. The active-site Proton acceptor is the His-881. The disordered stretch occupies residues Thr-930–Asn-963. Acidic residues predominate over residues Gly-953–Asn-963.

The protein belongs to the peptidase C19 family. USP4 subfamily. Interacts with RB1 (both dephosphorylated and hypophosphorylated forms). Interacts with RBL1 and RBL2. Interacts with ADORA2A (via cytoplasmic C-terminus); the interaction is direct. Interacts with SART3; recruits USP4 to its substrate PRPF3. Phosphorylated at Ser-445 by PKB/AKT1 in response to EGF stimulus, promoting its ability deubiquitinate RHEB. Post-translationally, monoubiquitinated by TRIM21. Ubiquitination does not lead to its proteasomal degradation. Autodeubiquitinated.

The protein localises to the cytoplasm. Its subcellular location is the nucleus. It carries out the reaction Thiol-dependent hydrolysis of ester, thioester, amide, peptide and isopeptide bonds formed by the C-terminal Gly of ubiquitin (a 76-residue protein attached to proteins as an intracellular targeting signal).. With respect to regulation, the completion of the deubiquitinase reaction is mediated by the DUSP and ubiquitin-like 1 domains which promotes the release of ubiquitin from the catalytic site enabling subsequent reactions to occur. Functionally, deubiquitinating enzyme that removes conjugated ubiquitin from target proteins. Deubiquitinates PDPK1. Deubiquitinates TRIM21. Deubiquitinates receptor ADORA2A which increases the amount of functional receptor at the cell surface. Deubiquitinates HAS2. Deubiquitinates RHEB in response to EGF signaling, promoting mTORC1 signaling. May regulate mRNA splicing through deubiquitination of the U4 spliceosomal protein PRPF3. This may prevent its recognition by the U5 component PRPF8 thereby destabilizing interactions within the U4/U6.U5 snRNP. May also play a role in the regulation of quality control in the ER. In Bos taurus (Bovine), this protein is Ubiquitin carboxyl-terminal hydrolase 4 (USP4).